The chain runs to 899 residues: Inositol 1,4,5-triphosphate receptor associated 1 (899 aa).

4 disordered regions span residues 32-110, 164-286, 324-391, and 463-486; these read PGTH…HRHL, RRGR…PLQH, KTAR…EEPG, and AAEQ…SKSG. Residues 100–110 are compositionally biased toward basic residues; it reads SPHRRLSHRHL. The residue at position 106 (S106) is a Phosphoserine. The segment at 140–172 is interaction with PRKG1; sequence SEEDKKKNLALLEEAKLVSERFLTRRGRKSRSS. Residues 171-180 are compositionally biased toward polar residues; that stretch reads SSLGDSPSAV. The segment covering 181 to 203 has biased composition (low complexity); sequence SPNLSSGASPASSRSCSLTISTS. Positions 266–281 are enriched in basic and acidic residues; sequence TVEKTKELTVEQKENF. Over residues 333–351 the composition is skewed to polar residues; sequence PRTTAQGSGGTVSPHSLGQ. Position 382 is a phosphoserine (S382). Residues 521–567 are interaction with ITPR1; that stretch reads NVFVQLSLAFRNDSYTLESRINQAERERNLTEENTEKELENFKASIT. Positions 534-632 form a coiled coil; sequence SYTLESRINQ…MQYVENLKRT (99 aa). Phosphoserine occurs at positions 670 and 683. Disordered regions lie at residues 695–722 and 757–818; these read LPGQ…SSIS and TSQE…DQGS. A compositionally biased stretch (low complexity) spans 699–715; that stretch reads APSSSPMPSLPALSESS. 2 stretches are compositionally biased toward basic and acidic residues: residues 759–770 and 777–787; these read QETKAKAEEEAY and GVKKTEELQDL. A compositionally biased stretch (acidic residues) spans 788-814; sequence KEEEEEEQKTESPEEPEEVEETQEDEK. The chain crosses the membrane as a helical span at residues 839–859; that stretch reads WQVIWMMAAVMLVLSVVLGLY. Residues 867 to 899 form a disordered region; it reads EEADGPPGRSTCSAAQRDSWWSSGLQQELPAEQ. A compositionally biased stretch (polar residues) spans 876–892; the sequence is STCSAAQRDSWWSSGLQ.

As to quaternary structure, part of cGMP kinase signaling complex at least composed of ACTA2/alpha-actin, CNN1/calponin H1, PLN/phospholamban, PRKG1 and ITPR1. Interacts with PRKG1/cGKI-beta and ITPR1/IP3R type I. Interacts with HCN4; regulates HCN4 channel activity. In terms of processing, phosphorylated by PRKG1/cGKI. Highly expressed in smooth muscle such as aorta, colon and uterus. Detected in the brain, in the thalamus, in the hippocampus and myenteric plexus. Highly expressed in megakaryocytes. Down-regulated during macrophage differentiation.

The protein resides in the membrane. It is found in the cytoplasm. Its subcellular location is the perinuclear region. The protein localises to the sarcoplasmic reticulum. Its function is as follows. Plays a role as NO/PRKG1-dependent regulator of IP3-induced calcium release; its phosphorylation by PRKG1 inhibits bradykinin and IP3-induced calcium release from intracellular stores. Recruits PRKG1 to the endoplasmic reticulum and may mediate the assembly of PRKG1 and ITPR1 in a macrocomplex. Involved in PRKG1 signaling cascade leading to inhibition of platelet activation and aggregation. Also mediates NO-dependent inhibition of calcium signaling in gastrointestinal smooth muscle contributing to NO-dependent relaxation. Plays a role in the regulation of cellular excitability by regulating the hyperpolarization-activated cyclic nucleotide-gated HCN4 channel activity. In Mus musculus (Mouse), this protein is Inositol 1,4,5-triphosphate receptor associated 1 (Irag1).